The following is a 305-amino-acid chain: Oxygen-dependent coproporphyrinogen-III oxidase (305 aa).

Ser94 lines the substrate pocket. A divalent metal cation-binding residues include His98 and His108. His108 functions as the Proton donor in the catalytic mechanism. A substrate-binding site is contributed by 110–112 (NVR). His147 and His177 together coordinate a divalent metal cation. The important for dimerization stretch occupies residues 242-277 (YVEFNLVYDRGTLFGLQTGGRTESILMSMPPLVRWE). 260-262 (GGR) is a substrate binding site.

Belongs to the aerobic coproporphyrinogen-III oxidase family. In terms of assembly, homodimer. A divalent metal cation is required as a cofactor.

It localises to the cytoplasm. It catalyses the reaction coproporphyrinogen III + O2 + 2 H(+) = protoporphyrinogen IX + 2 CO2 + 2 H2O. Its pathway is porphyrin-containing compound metabolism; protoporphyrin-IX biosynthesis; protoporphyrinogen-IX from coproporphyrinogen-III (O2 route): step 1/1. Involved in the heme biosynthesis. Catalyzes the aerobic oxidative decarboxylation of propionate groups of rings A and B of coproporphyrinogen-III to yield the vinyl groups in protoporphyrinogen-IX. The protein is Oxygen-dependent coproporphyrinogen-III oxidase of Shewanella denitrificans (strain OS217 / ATCC BAA-1090 / DSM 15013).